The following is a 382-amino-acid chain: Na(+)/H(+) antiporter NhaA (382 aa).

Transmembrane regions (helical) follow at residues 13 to 33, 58 to 78, 94 to 114, 124 to 144, 153 to 173, 179 to 199, 204 to 224, 256 to 276, 285 to 305, 325 to 345, and 357 to 377; these read IGGILLFIAAVIAIIIANSPF, LLLWINDGLMAIYFLLIGLEI, LVPALTALAGLIFPALIFIFF, GWAIPTATDIAFTLGIVSLLG, ILLTAIAIFDDIAAIVIIALF, SLLSLSLALVFTLILIGLNYF, ISVFMLFGVALWIAVLKSGVH, VVFLILPLFAFANAGVSFVGL, VVLGIGLGLFLGKQLGIFLSL, VYGIALICGVGFTMSLFIGSL, and MVKIGVVLGSFIAGLTGFLVL.

The protein belongs to the NhaA Na(+)/H(+) (TC 2.A.33) antiporter family.

The protein resides in the cell inner membrane. It catalyses the reaction Na(+)(in) + 2 H(+)(out) = Na(+)(out) + 2 H(+)(in). Its function is as follows. Na(+)/H(+) antiporter that extrudes sodium in exchange for external protons. The polypeptide is Na(+)/H(+) antiporter NhaA (Legionella pneumophila (strain Paris)).